The chain runs to 384 residues: Secreted effector protein EspF(U) (384 aa).

A run of 6 repeats spans residues 96–142, 143–189, 190–236, 237–283, 284–330, and 331–377. The tract at residues 96–377 is 6 X 48 AA approximate tandem repeats; sequence IXPARSMAEH…RLMQHLAEHG (282 aa). The interval 247–266 is disordered; sequence IPPAPNWPAPPPPVQNEQSR. The segment covering 248-260 has biased composition (pro residues); sequence PPAPNWPAPPPPV.

It belongs to the EspF(U)/TccP family. Interacts with host BAIAP2 and host WASL/N-WASP. Can also interact with host proteins BAIAP2L1 and WAS/WASP.

Its subcellular location is the secreted. It is found in the host cytoplasm. Its function is as follows. Required for efficient pedestal formation in host epithelial cells during infection. Acts as an intermediate between Tir (via host BAIAP2) and host WASL/N-WASP. Directly binds and activates WASL/N-WASP, which stimulates actin polymerization and leads to the formation of actin pedestals at the sites of bacterial adhesion. The sequence is that of Secreted effector protein EspF(U) (espF(U)) from Escherichia coli O157:H7.